The following is a 1353-amino-acid chain: Patatin-like phospholipase domain-containing protein ZK370.4 (1353 aa).

Residues 12-32 (IFLVTFIYNHVLLILFTVCII) traverse the membrane as a helical segment. Low complexity predominate over residues 49–64 (TPSSASSSATPSSRNS). 2 disordered regions span residues 49 to 188 (TPSS…STAF) and 199 to 218 (SRSYFRQNQENNKDTRVRPP). Over residues 91-123 (SPKSGTPTNTQTIEPPTSLNLNMVNSASGSNLS) the composition is skewed to polar residues. Basic residues-rich tracts occupy residues 126-138 (RRMRKRDWAKKLY) and 170-184 (PRRRSKHGNSSRRRQ). Residues 245–372 (LKML…VITR), 444–581 (FGLV…VLRR), and 570–692 (IYLP…LGQY) contribute to the a nucleoside 3',5'-cyclic phosphate site. The PNPLA domain maps to 942–1108 (LVLGGGGARG…VNNVPADVMR (167 aa)). Positions 946-951 (GGGARG) match the GXGXXG motif. Residues 973-977 (GTSIG) carry the GXSXG motif. Residue Ser-975 is the Nucleophile of the active site. The active-site Proton acceptor is the Asp-1095. Positions 1095–1097 (DGG) match the DGA/G motif. 3 disordered regions span residues 1230-1249 (EKETRKFKRQQSRREKPDVS), 1274-1293 (SMSLNPSANGPVGRAGDHFL), and 1305-1353 (YEEE…PPSS). The span at 1328–1337 (GPPSSSSSGG) shows a compositional bias: low complexity.

The protein belongs to the NTE family.

It localises to the membrane. The sequence is that of Patatin-like phospholipase domain-containing protein ZK370.4 from Caenorhabditis elegans.